The chain runs to 366 residues: MAGPAWISKVSRLLGAFHNQKQVTRGFAGGVKTVTLIPGDGIGPEISAAVMKIFDAAKAPIQWEERNVAAIQGPGGKWMIPPEAKESMDKNKMGLKGPLKTPIAAGHPSMNLLLRKTFDLYANVRPCVSIEGYKTPYHDVNIVTIRENTEGEYSGIEHVIVDGVVQSIKLITEAASKRIAEFAFEYARNNHRSNVTAVHKANIMRMSDGLFLQKCREVAENCKDIKFNEMYLDTVCLNMVQDPSQFDVLVMPNLYGDILSDLCAGLIGGLGVTPSGNIGANGVAIFESVHGTAPDIAGKDMANPTALLLSAVMMLRHMGLFDHAAKIETACFATIKDGKSLTKDLGGNSKCSDFTEEICRRVKDLD.

A mitochondrion-targeting transit peptide spans 1–27; the sequence is MAGPAWISKVSRLLGAFHNQKQVTRGF. An N6-succinyllysine modification is found at Lys77. Phosphothreonine is present on Thr101. Substrate is bound by residues Arg115, Arg125, and Arg146. At Lys223 the chain carries N6-acetyllysine. Positions 233, 257, and 261 each coordinate Mg(2+). An N6-acetyllysine; alternate modification is found at Lys343. Lys343 is modified (N6-succinyllysine; alternate). Lys350 is subject to N6-succinyllysine.

The protein belongs to the isocitrate and isopropylmalate dehydrogenases family. Heterooligomer of subunits alpha (IDH3A), beta (IDH3B), and gamma (IDH3G) in the apparent ratio of 2:1:1. The heterodimer containing one IDH3A and one IDH3B subunit and the heterodimer containing one IDH3A and one IDH3G subunit assemble into a heterotetramer (which contains two subunits of IDH3A, one of IDH3B and one of IDH3G) and further into the heterooctamer. Mg(2+) serves as cofactor. It depends on Mn(2+) as a cofactor.

The protein localises to the mitochondrion. It carries out the reaction D-threo-isocitrate + NAD(+) = 2-oxoglutarate + CO2 + NADH. Its activity is regulated as follows. The heterotetramer and the heterodimer composed of IDH3A and IDH3G subunits can be allosterically activated by citrate (CIT) or/and ADP, and the two activators can act independently or synergistically. The heterodimer composed of IDH3A and IDH3B subunits cannot be allosterically regulated and the allosteric regulation of the heterotetramer is through the IDH3G subunit and not the IDH3B subunit. The IDH3G subunit contains the allosteric site which consists of a CIT-binding site and an ADP-binding site, and the binding of CIT and ADP causes conformational changes at the allosteric site which are transmitted to the active site in the catalytic subunit (IDH3A) through a cascade of conformational changes at the heterodimer interface, leading to stabilization of the isocitrate-binding at the active site and thus activation of the enzyme. ATP can activate the heterotetramer and the heterodimer composed of IDH3A and IDH3G subunits at low concentrations but inhibits their activities at high concentrations, whereas ATP exhibits only inhibitory effect on the heterodimer composed of IDH3A and IDH3B subunits. Catalytic subunit of the enzyme which catalyzes the decarboxylation of isocitrate (ICT) into alpha-ketoglutarate. The heterodimer composed of the alpha (IDH3A) and beta (IDH3B) subunits and the heterodimer composed of the alpha (IDH3A) and gamma (IDH3G) subunits, have considerable basal activity but the full activity of the heterotetramer (containing two subunits of IDH3A, one of IDH3B and one of IDH3G) requires the assembly and cooperative function of both heterodimers. This is Isocitrate dehydrogenase [NAD] subunit alpha, mitochondrial from Bos taurus (Bovine).